Here is a 96-residue protein sequence, read N- to C-terminus: Co-chaperonin GroES (96 aa).

The protein belongs to the GroES chaperonin family. In terms of assembly, heptamer of 7 subunits arranged in a ring. Interacts with the chaperonin GroEL.

The protein resides in the cytoplasm. Its function is as follows. Together with the chaperonin GroEL, plays an essential role in assisting protein folding. The GroEL-GroES system forms a nano-cage that allows encapsulation of the non-native substrate proteins and provides a physical environment optimized to promote and accelerate protein folding. GroES binds to the apical surface of the GroEL ring, thereby capping the opening of the GroEL channel. This Paraburkholderia phytofirmans (strain DSM 17436 / LMG 22146 / PsJN) (Burkholderia phytofirmans) protein is Co-chaperonin GroES.